Here is a 270-residue protein sequence, read N- to C-terminus: DNA repair protein RecO (270 aa).

It belongs to the RecO family.

Functionally, involved in DNA repair and RecF pathway recombination. In Synechococcus sp. (strain WH7803), this protein is DNA repair protein RecO.